Here is a 482-residue protein sequence, read N- to C-terminus: uncharacterized protein (482 aa).

A run of 12 helical transmembrane segments spans residues Leu-40–Leu-57, Ala-83–Val-103, His-109–Val-129, Leu-140–Thr-160, Leu-170–Gly-190, Trp-205–Leu-225, Val-278–Leu-298, Tyr-311–Ser-331, Gly-338–Thr-358, Val-366–Ile-386, Ala-399–Tyr-418, and Gly-428–Leu-448.

This sequence belongs to the major facilitator superfamily. Allantoate permease family.

Its subcellular location is the endoplasmic reticulum. It localises to the membrane. This is an uncharacterized protein from Schizosaccharomyces pombe (strain 972 / ATCC 24843) (Fission yeast).